We begin with the raw amino-acid sequence, 1041 residues long: Probable rhamnogalacturonate lyase C (1041 aa).

The N-terminal stretch at 1–21 (MFASTLRKTFVFLGLATYSAA) is a signal peptide. N-linked (GlcNAc...) asparagine glycans are attached at residues Asn-28, Asn-94, Asn-116, Asn-142, Asn-231, Asn-283, Asn-528, and Asn-634. The tract at residues 703–728 (ISRPCPRKGGTRRRKKERKKEGKKQG) is disordered. Residues 707 to 720 (CPRKGGTRRRKKER) show a composition bias toward basic residues. Residue Asn-864 is glycosylated (N-linked (GlcNAc...) asparagine).

This sequence belongs to the polysaccharide lyase 4 family.

Its subcellular location is the secreted. It catalyses the reaction Endotype eliminative cleavage of L-alpha-rhamnopyranosyl-(1-&gt;4)-alpha-D-galactopyranosyluronic acid bonds of rhamnogalacturonan I domains in ramified hairy regions of pectin leaving L-rhamnopyranose at the reducing end and 4-deoxy-4,5-unsaturated D-galactopyranosyluronic acid at the non-reducing end.. In terms of biological role, pectinolytic enzymes consist of four classes of enzymes: pectin lyase, polygalacturonase, pectin methylesterase and rhamnogalacturonase. Degrades the rhamnogalacturonan I (RG-I) backbone of pectin. In Emericella nidulans (strain FGSC A4 / ATCC 38163 / CBS 112.46 / NRRL 194 / M139) (Aspergillus nidulans), this protein is Probable rhamnogalacturonate lyase C (rglC).